Reading from the N-terminus, the 515-residue chain is Ecdysteroid UDP-glucosyltransferase (515 aa).

An N-terminal signal peptide occupies residues 1 to 31; sequence MKMIILVVSLHVLRNSAAVRVLCMFPTPSYS.

It belongs to the UDP-glycosyltransferase family.

Catalyzes the transfer of glucose from UDP-glucose to ecdysteroids which are insect molting hormones. Expression of egt interferes with normal insect development and block molting. The chain is Ecdysteroid UDP-glucosyltransferase (EGT) from Spodoptera littoralis nuclear polyhedrosis virus (SlNPV).